Consider the following 377-residue polypeptide: Hsc70-interacting protein 2 (377 aa).

The disordered stretch occupies residues 68 to 123 (AKANEPANAPEDSEDEKSLSDPESDVELDMEGVIEADSDPAQPMGNYSKKATEEEV). Ser80 is subject to Phosphoserine. Positions 89–105 (PESDVELDMEGVIEADS) are enriched in acidic residues. 3 TPR repeats span residues 126–159 (ASELRAQAASAYGQQKFDEAIALYTKAIELSPGN), 161–193 (LFHAKRGQAFLKLKKPNACIRDCDVALELNSDL), and 195–227 (AGYKFRGRARRLLGDFELAAHDLRQACKLDFDE). Residues 239 to 276 (NAKKIEQHRLKQERRQAERKIKERQRDQRRARKEQEKH) adopt a coiled-coil conformation. Residues 243–277 (IEQHRLKQERRQAERKIKERQRDQRRARKEQEKHN) show a composition bias toward basic and acidic residues. 2 disordered regions span residues 243–302 (IEQH…DILG) and 344–377 (DVGAAFGQAGEKAGKPSEPKPKKDSADFVDDGLD). Gly residues predominate over residues 282-293 (GSSGEFSGGNPG). Positions 294–336 (NGNMSDILGAMSDPEVSAAIQDILSNPGNITKYASNPKIYNLI) constitute an STI1 domain. Residues 355–369 (KAGKPSEPKPKKDSA) are compositionally biased toward basic and acidic residues.

It belongs to the FAM10 family. As to quaternary structure, homotetramer. Interacts with Hsc70 as well as DNAJ homologs and Hsp90.

It is found in the cytoplasm. In terms of biological role, one HIP oligomer binds the ATPase domains of at least two Hsc70 molecules dependent on activation of the Hsc70 ATPase by Hsp40. Stabilizes the ADP state of Hsc70 that has a high affinity for substrate protein. Through its own chaperone activity, it may contribute to the interaction of Hsc70 with various target proteins. This is Hsc70-interacting protein 2 from Drosophila melanogaster (Fruit fly).